The following is a 640-amino-acid chain: Chaperone protein DnaK (640 aa).

The residue at position 196 (Thr196) is a Phosphothreonine; by autocatalysis. 2 disordered regions span residues 510–530 (NDAKAHAEEDAKRKEEVETKN) and 598–640 (AADA…DKDK).

It belongs to the heat shock protein 70 family.

Functionally, acts as a chaperone. In Prosthecochloris aestuarii (strain DSM 271 / SK 413), this protein is Chaperone protein DnaK.